The following is a 371-amino-acid chain: Glutamate 5-kinase (371 aa).

Lysine 8 is a binding site for ATP. Substrate is bound by residues serine 49, aspartate 136, and asparagine 149. Residues 169–170 (TD) and 213–219 (TGGMATK) each bind ATP. Residues 278-356 (TGKLILDDGA…EDIPQVLGYA (79 aa)) enclose the PUA domain.

Belongs to the glutamate 5-kinase family.

The protein resides in the cytoplasm. It catalyses the reaction L-glutamate + ATP = L-glutamyl 5-phosphate + ADP. It participates in amino-acid biosynthesis; L-proline biosynthesis; L-glutamate 5-semialdehyde from L-glutamate: step 1/2. Functionally, catalyzes the transfer of a phosphate group to glutamate to form L-glutamate 5-phosphate. The polypeptide is Glutamate 5-kinase (Acaryochloris marina (strain MBIC 11017)).